We begin with the raw amino-acid sequence, 207 residues long: Probable GTP-binding protein EngB (207 aa).

The EngB-type G domain maps to 22-194 (DLPEIAFAGR…WRRIEEVLPA (173 aa)). Residues 30–37 (GRSNVGKS), 57–61 (GRTQL), 75–78 (DLPG), 142–145 (TKCD), and 173–175 (FSA) each bind GTP. The Mg(2+) site is built by Ser-37 and Thr-59.

It belongs to the TRAFAC class TrmE-Era-EngA-EngB-Septin-like GTPase superfamily. EngB GTPase family. Mg(2+) serves as cofactor.

Its function is as follows. Necessary for normal cell division and for the maintenance of normal septation. The polypeptide is Probable GTP-binding protein EngB (Geotalea daltonii (strain DSM 22248 / JCM 15807 / FRC-32) (Geobacter daltonii)).